The sequence spans 477 residues: Trigger factor (477 aa).

The 86-residue stretch at 163–248 folds into the PPIase FKBP-type domain; sequence ENLVIFDYKA…ITEVKKSEEV (86 aa). Residues 408–461 are compositionally biased toward basic and acidic residues; that stretch reads KAKPSKKEISKEEAEKILKEHQKQDHNHEHDHNHDHDHPEEKKASKSTKIEKKP. The tract at residues 408–477 is disordered; it reads KAKPSKKEIS…KPSTKKVSKK (70 aa).

It belongs to the FKBP-type PPIase family. Tig subfamily.

The protein localises to the cytoplasm. It catalyses the reaction [protein]-peptidylproline (omega=180) = [protein]-peptidylproline (omega=0). Involved in protein export. Acts as a chaperone by maintaining the newly synthesized protein in an open conformation. Functions as a peptidyl-prolyl cis-trans isomerase. The protein is Trigger factor of Pelagibacter ubique (strain HTCC1062).